An 841-amino-acid polypeptide reads, in one-letter code: mRNA export factor ICP27 homolog (841 aa).

Disordered regions lie at residues 12-82 and 115-163; these read PFAG…QYDK and RAQG…TSPD. The segment covering 32 to 49 has biased composition (low complexity); that stretch reads YSQQQSQHYYYGHNQSSY. The segment covering 66 to 79 has biased composition (pro residues); it reads MPPPLSSPSSPPPQ. Residues 132-147 show a composition bias toward low complexity; sequence SSLVSSNNSNNNTTLS. 4 residues coordinate Zn(2+): C298, H411, C413, and C418. Residues 298-418 form a CHC2-type zinc finger; the sequence is CLLDSPGGGG…PGHRCQNEIC (121 aa). Disordered stretches follow at residues 444–749 and 774–811; these read HPNG…DDLH and SVTP…TDQP. A compositionally biased stretch (basic and acidic residues) spans 495 to 507; sequence VDSRGGGGDRRGD. Residues 514-526 are compositionally biased toward basic residues; sequence NHHRHHTRRARTR. Over residues 553–563 the composition is skewed to basic and acidic residues; that stretch reads RRGEAQRESNG. Low complexity-rich tracts occupy residues 568-579 and 591-603; these read KSPSTVSSTTVH and SRKS…QPET. Residues 614–623 are compositionally biased toward pro residues; it reads MPPPPSPCSP. Basic and acidic residues predominate over residues 641 to 657; that stretch reads RPHDPPSGEPADAEKEL. Low complexity predominate over residues 688 to 699; that stretch reads DSSSSSSDSSSS. The span at 708-731 shows a compositional bias: basic and acidic residues; it reads EDCRELDLQSKRLEEALEERCERD. Acidic residues-rich tracts occupy residues 732–749 and 793–809; these read FEAD…DDLH and DAEE…DETD.

This sequence belongs to the HHV-1 ICP27 protein family.

The protein resides in the virion tegument. Its subcellular location is the virion. It is found in the host nucleus. The protein localises to the host cytoplasm. Functionally, immediate early (EI) protein that plays many roles during productive infection including regulation of viral gene expression and nuclear export of intronless viral RNAs. This Mus musculus (Mouse) protein is mRNA export factor ICP27 homolog.